The following is a 278-amino-acid chain: Ribosomal RNA small subunit methyltransferase A (278 aa).

Asn27, Leu29, Gly54, Glu75, Asp101, and Asn120 together coordinate S-adenosyl-L-methionine.

This sequence belongs to the class I-like SAM-binding methyltransferase superfamily. rRNA adenine N(6)-methyltransferase family. RsmA subfamily.

It localises to the cytoplasm. The enzyme catalyses adenosine(1518)/adenosine(1519) in 16S rRNA + 4 S-adenosyl-L-methionine = N(6)-dimethyladenosine(1518)/N(6)-dimethyladenosine(1519) in 16S rRNA + 4 S-adenosyl-L-homocysteine + 4 H(+). Its function is as follows. Specifically dimethylates two adjacent adenosines (A1518 and A1519) in the loop of a conserved hairpin near the 3'-end of 16S rRNA in the 30S particle. May play a critical role in biogenesis of 30S subunits. The protein is Ribosomal RNA small subunit methyltransferase A of Zymomonas mobilis subsp. mobilis (strain ATCC 31821 / ZM4 / CP4).